Reading from the N-terminus, the 34-residue chain is Somatostatin (34 aa).

The disordered stretch occupies residues 1–20 (AVERPRQDGQVHEPPGRERK). C23 and C34 are joined by a disulfide.

This sequence belongs to the somatostatin family.

Its subcellular location is the secreted. Functionally, somatostatin inhibits the release of somatotropin. This chain is Somatostatin (sst), found in Myxine glutinosa (Atlantic hagfish).